The following is a 448-amino-acid chain: Argininosuccinate synthase (448 aa).

ATP is bound by residues 17-25 (AFSGGLDTS) and Ala43. Tyr99 lines the L-citrulline pocket. ATP contacts are provided by Gly129 and Thr131. Residues Thr131, Asn135, and Asp136 each coordinate L-aspartate. Residue Asn135 participates in L-citrulline binding. Residue Asp136 coordinates ATP. L-citrulline contacts are provided by Arg139 and Ser192. Asp194 provides a ligand contact to ATP. L-citrulline contacts are provided by Thr201, Glu203, and Glu280.

The protein belongs to the argininosuccinate synthase family. Type 2 subfamily. Homotetramer.

The protein localises to the cytoplasm. The catalysed reaction is L-citrulline + L-aspartate + ATP = 2-(N(omega)-L-arginino)succinate + AMP + diphosphate + H(+). It participates in amino-acid biosynthesis; L-arginine biosynthesis; L-arginine from L-ornithine and carbamoyl phosphate: step 2/3. The protein is Argininosuccinate synthase of Bradyrhizobium sp. (strain ORS 278).